The sequence spans 420 residues: Tryptophan synthase beta chain (420 aa).

Lys-112 carries the post-translational modification N6-(pyridoxal phosphate)lysine.

The protein belongs to the TrpB family. Tetramer of two alpha and two beta chains. Requires pyridoxal 5'-phosphate as cofactor.

It catalyses the reaction (1S,2R)-1-C-(indol-3-yl)glycerol 3-phosphate + L-serine = D-glyceraldehyde 3-phosphate + L-tryptophan + H2O. It functions in the pathway amino-acid biosynthesis; L-tryptophan biosynthesis; L-tryptophan from chorismate: step 5/5. The beta subunit is responsible for the synthesis of L-tryptophan from indole and L-serine. This chain is Tryptophan synthase beta chain, found in Thermosipho africanus (strain TCF52B).